The chain runs to 474 residues: Carbohydrate sulfotransferase 3 (474 aa).

Residues 1–19 lie on the Cytoplasmic side of the membrane; it reads MEKGLALPQDCRDLVHNLK. A helical; Signal-anchor for type II membrane protein transmembrane segment spans residues 20-38; it reads IRGRYVLFLAFVVIVFIFI. The Lumenal portion of the chain corresponds to 39 to 474; it reads EKENKIISRV…LEERGTFWVT (436 aa). N63, N74, and N96 each carry an N-linked (GlcNAc...) asparagine glycan. A 3'-phosphoadenylyl sulfate-binding site is contributed by 137–143; sequence TRTGSSF. A glycan (N-linked (GlcNAc...) asparagine) is linked at N252. 3'-phosphoadenylyl sulfate is bound at residue 297 to 305; that stretch reads RDPRAVLAS. Residues N415 and N459 are each glycosylated (N-linked (GlcNAc...) asparagine).

Belongs to the sulfotransferase 1 family. Gal/GlcNAc/GalNAc subfamily. In terms of processing, N-glycosylated.

The protein localises to the golgi apparatus membrane. It catalyses the reaction chondroitin beta-D-glucuronate + n 3'-phosphoadenylyl sulfate = chondroitin 6'-sulfate + n adenosine 3',5'-bisphosphate + n H(+). The enzyme catalyses 3'-phosphoadenylyl sulfate + keratan = adenosine 3',5'-bisphosphate + keratan 6'-sulfate.. Functionally, sulfotransferase that utilizes 3'-phospho-5'-adenylyl sulfate (PAPS) as sulfonate donor to catalyze the transfer of sulfate to position 6 of the N-acetylgalactosamine (GalNAc) residue of chondroitin. Chondroitin sulfate constitutes the predominant proteoglycan present in cartilage and is distributed on the surfaces of many cells and extracellular matrices. Catalyzes with a lower efficiency the sulfation of Gal residues of keratan sulfate, another glycosaminoglycan. Can also catalyze the sulfation of the Gal residues in sialyl N-acetyllactosamine (sialyl LacNAc) oligosaccharides. May play a role in the maintenance of naive T-lymphocytes in the spleen. This Rattus norvegicus (Rat) protein is Carbohydrate sulfotransferase 3 (Chst3).